Consider the following 261-residue polypeptide: 6-carboxyhexanoate--CoA ligase (261 aa).

It belongs to the BioW family. Homodimer. The cofactor is Mg(2+).

It carries out the reaction heptanedioate + ATP + CoA = 6-carboxyhexanoyl-CoA + AMP + diphosphate. Its pathway is metabolic intermediate metabolism; pimeloyl-CoA biosynthesis; pimeloyl-CoA from pimelate: step 1/1. Catalyzes the transformation of pimelate into pimeloyl-CoA with concomitant hydrolysis of ATP to AMP. The polypeptide is 6-carboxyhexanoate--CoA ligase (Bacillus licheniformis (strain ATCC 14580 / DSM 13 / JCM 2505 / CCUG 7422 / NBRC 12200 / NCIMB 9375 / NCTC 10341 / NRRL NRS-1264 / Gibson 46)).